Consider the following 484-residue polypeptide: Carbohydrate sulfotransferase 7 (484 aa).

The Cytoplasmic segment spans residues 1–12 (MKGRRRRRREYC). Residues 13 to 33 (KFTLLLALYTLLLLLVPSVLD) traverse the membrane as a helical; Signal-anchor for type II membrane protein segment. The Lumenal portion of the chain corresponds to 34–484 (SHSEQDKGRN…PLETKANWAV (451 aa)). Residues 71 to 90 (RSLAEGNPDRSPGSPGNLSA) form a disordered region. N-linked (GlcNAc...) asparagine glycosylation is present at Asn-87. Residue 108-114 (WRTGSSF) participates in 3'-phosphoadenylyl sulfate binding. Asn-184 is a glycosylation site (N-linked (GlcNAc...) asparagine). 3'-phosphoadenylyl sulfate is bound at residue 276–284 (RDPRAVHNS). Residue Asn-405 is glycosylated (N-linked (GlcNAc...) asparagine). Ser-460 bears the Phosphoserine mark. Over residues 460 to 473 (SGDERDRKTVREGE) the composition is skewed to basic and acidic residues. The disordered stretch occupies residues 460-484 (SGDERDRKTVREGETPLETKANWAV).

It belongs to the sulfotransferase 1 family. Gal/GlcNAc/GalNAc subfamily. In terms of tissue distribution, widely expressed. Highly expressed in kidney. Expressed at lower level in heart, lung and liver.

The protein resides in the golgi apparatus membrane. It catalyses the reaction chondroitin beta-D-glucuronate + n 3'-phosphoadenylyl sulfate = chondroitin 6'-sulfate + n adenosine 3',5'-bisphosphate + n H(+). Functionally, sulfotransferase that utilizes 3'-phospho-5'-adenylyl sulfate (PAPS) as sulfonate donor to catalyze the transfer of sulfate to position 6 of non-reducing N-acetylglucosamine (GlcNAc) residues. Preferentially acts on mannose-linked GlcNAc. Also able to catalyze the transfer of sulfate to position 6 of the N-acetylgalactosamine (GalNAc) residue of chondroitin. Also acts on core 2 mucin-type oligosaccharide and N-acetyllactosamine oligomer with a lower efficiency. Has weak or no activity toward keratan sulfate and oligosaccharides containing the Galbeta1-4GlcNAc. Catalyzes 6-O-sulfation of beta-benzyl GlcNAc but not alpha- or beta-benzyl GalNAc. The chain is Carbohydrate sulfotransferase 7 (Chst7) from Mus musculus (Mouse).